Reading from the N-terminus, the 298-residue chain is Tryptophan 2,3-dioxygenase (298 aa).

Substrate is bound by residues 51–55 (FIIQH), tyrosine 113, and arginine 117. Position 240 (histidine 240) interacts with heme. Position 254 (threonine 254) interacts with substrate.

The protein belongs to the tryptophan 2,3-dioxygenase family. In terms of assembly, homotetramer. Requires heme as cofactor.

It catalyses the reaction L-tryptophan + O2 = N-formyl-L-kynurenine. The protein operates within amino-acid degradation; L-tryptophan degradation via kynurenine pathway; L-kynurenine from L-tryptophan: step 1/2. Its function is as follows. Heme-dependent dioxygenase that catalyzes the oxidative cleavage of the L-tryptophan (L-Trp) pyrrole ring and converts L-tryptophan to N-formyl-L-kynurenine. Catalyzes the oxidative cleavage of the indole moiety. The chain is Tryptophan 2,3-dioxygenase from Xanthomonas euvesicatoria pv. vesicatoria (strain 85-10) (Xanthomonas campestris pv. vesicatoria).